The sequence spans 563 residues: MPVTDAATEPAYTVGDYLLDRLAELGVSEIFGVPGDYNLEFLDHIVAHPRLRWVGNANELNAGYAADGYGRLRGMSALVTTFGVGELSAANAVAGSYAEQVPVVHIVGGPSKDAQGTRRALHHSLGDGDFEHFFRVSREITCAQANLMPATARREIDRVLSEVREQKRPGYILLSTDVARFPTEPPEAALPRYTGGTSPRALAMFTEAAAALIGEHRITVLADLLVHRLQAIKELEALLAADVVPHATLMWGKSLLDESSPNFLGIYAGSASAPAVRTAIEEAPVLVTAGVVFTDMVSGFFSQRIDPARTIDVGQYQSSVAGEVFAPLEMGEALQALTAILTRRGVSSPPVASPPAEPLPPPPPREQPLTQKMVWDRVCTALTPGNVVLADQGTSFYGMADHRLPQGVTFIGQPLWGSIGYTLPAALGAAVAHPDRRTVLLIGDGAAQLTVQELGTFAREGLSPVIVVVNNDGYTVERAIHGETAPYNDIVGWKWTEVPNALGVTEHLAFRVQTYGELDDALTAAARHQDRMVLVEVVLPRLEIPRLLVELVRPTSPDGSPRR.

Thiamine diphosphate is bound at residue Glu-59. A disordered region spans residues 347–367 (SSPPVASPPAEPLPPPPPREQ). The span at 351–366 (VASPPAEPLPPPPPRE) shows a compositional bias: pro residues. Positions 394–476 (TSFYGMADHR…VVVNNDGYTV (83 aa)) are thiamine pyrophosphate binding. Asp-444, Asn-471, and Gly-473 together coordinate Mg(2+).

This sequence belongs to the TPP enzyme family. It depends on a metal cation as a cofactor. Thiamine diphosphate is required as a cofactor.

In terms of biological role, decarboxylates branched-chain and aromatic alpha-keto acids to aldehydes. The sequence is that of Alpha-keto-acid decarboxylase (kdc) from Mycolicibacterium paratuberculosis (strain ATCC BAA-968 / K-10) (Mycobacterium paratuberculosis).